Consider the following 199-residue polypeptide: Nucleoside triphosphate pyrophosphatase (199 aa).

The active-site Proton acceptor is aspartate 76.

The protein belongs to the Maf family. It depends on a divalent metal cation as a cofactor.

It localises to the cytoplasm. The enzyme catalyses a ribonucleoside 5'-triphosphate + H2O = a ribonucleoside 5'-phosphate + diphosphate + H(+). It catalyses the reaction a 2'-deoxyribonucleoside 5'-triphosphate + H2O = a 2'-deoxyribonucleoside 5'-phosphate + diphosphate + H(+). Functionally, nucleoside triphosphate pyrophosphatase. May have a dual role in cell division arrest and in preventing the incorporation of modified nucleotides into cellular nucleic acids. The polypeptide is Nucleoside triphosphate pyrophosphatase (Ruegeria sp. (strain TM1040) (Silicibacter sp.)).